The following is a 236-amino-acid chain: MTRRYWNINLEEMMEAGVHFGHGTRKWNPKMAPYISAKRKGIHITNLTRTARFLSEACDLVFDAASRGKQFLIVGTKNKEADSVAWAAIRARCHYVNKKWLGGMLTNWSTTETRLHKFRDLRTEQKTGGLNRLPKRDAAMLKRQLSHLQTYLGGIKYMTGLPDIVIIVDQHEEYTPLQECITLGIPTICLIDTNCDPDLADISIPSNDYSISSIRLILNKLVFAICEGRSGYIRNS.

Belongs to the universal ribosomal protein uS2 family.

The protein localises to the plastid. It localises to the chloroplast. The sequence is that of Small ribosomal subunit protein uS2c (rps2) from Guizotia abyssinica (Niger).